A 914-amino-acid chain; its full sequence is DNA mismatch repair protein MutS (914 aa).

The disordered stretch occupies residues Met-1 to Arg-25. Residues Leu-11–Arg-25 are compositionally biased toward polar residues. Gly-662 to Ser-669 serves as a coordination point for ATP.

The protein belongs to the DNA mismatch repair MutS family.

Functionally, this protein is involved in the repair of mismatches in DNA. It is possible that it carries out the mismatch recognition step. This protein has a weak ATPase activity. The protein is DNA mismatch repair protein MutS of Bartonella tribocorum (strain CIP 105476 / IBS 506).